The chain runs to 387 residues: 3-ketoacyl-CoA thiolase (387 aa).

Catalysis depends on Cys91, which acts as the Acyl-thioester intermediate. Active-site proton acceptor residues include His343 and Cys373.

Belongs to the thiolase-like superfamily. Thiolase family. As to quaternary structure, heterotetramer of two alpha chains (FadB) and two beta chains (FadA).

The protein resides in the cytoplasm. It carries out the reaction an acyl-CoA + acetyl-CoA = a 3-oxoacyl-CoA + CoA. The protein operates within lipid metabolism; fatty acid beta-oxidation. Functionally, catalyzes the final step of fatty acid oxidation in which acetyl-CoA is released and the CoA ester of a fatty acid two carbons shorter is formed. The protein is 3-ketoacyl-CoA thiolase of Escherichia coli O1:K1 / APEC.